The primary structure comprises 344 residues: MLNALYPLARPLLFSMDPEDAHHFTLNQLKRAHALGLSGCIGARVAPQPRTVMGIAFPNPVGLAAGLDKDGAYIDALGALGFGFIEVGTVTPRAQPGNPRPRMFRLPAASALINRMGFNNGGVDAFIRNVQASKWREAGGVLGLNIGKNADTPIERAVDDYLHCLERVYPYASYVTVNISSPNTKNLRQLQGASELDSLLGTLRGAQQRLADQHKRYVPVVLKIAPDLDDDQIANIGDALLRHRMDGVIATNTTIRREAVAGLPHAEEAGGLSGQPVREGSTRVIRALCGLLGDAVPIIGVGGILAGEHAREKIDAGAQLVQLYTGLIYRGPGLVAECARALAR.

FMN-binding positions include 65-69 (AGLDK) and threonine 89. Lysine 69 provides a ligand contact to substrate. 114–118 (NRMGF) is a substrate binding site. The FMN site is built by asparagine 145 and asparagine 178. Asparagine 178 is a substrate binding site. Serine 181 acts as the Nucleophile in catalysis. Asparagine 183 is a substrate binding site. The FMN site is built by lysine 223 and threonine 251. Substrate is bound at residue 252–253 (NT). Residues glycine 274, glycine 303, and 324 to 325 (YT) each bind FMN.

The protein belongs to the dihydroorotate dehydrogenase family. Type 2 subfamily. In terms of assembly, monomer. It depends on FMN as a cofactor.

The protein resides in the cell membrane. The enzyme catalyses (S)-dihydroorotate + a quinone = orotate + a quinol. It participates in pyrimidine metabolism; UMP biosynthesis via de novo pathway; orotate from (S)-dihydroorotate (quinone route): step 1/1. In terms of biological role, catalyzes the conversion of dihydroorotate to orotate with quinone as electron acceptor. The polypeptide is Dihydroorotate dehydrogenase (quinone) (Ralstonia nicotianae (strain ATCC BAA-1114 / GMI1000) (Ralstonia solanacearum)).